A 613-amino-acid chain; its full sequence is Ethylene response sensor 1 (613 aa).

3 helical membrane passes run 23 to 43 (ISDA…IYFV), 58 to 78 (FGAF…MFFM), and 95 to 115 (AVVS…LLSV). Residues Cys65 and His69 each contribute to the Cu cation site. Residues 158–307 (DRHTILRTTL…NVADQVAVAL (150 aa)) form the GAF domain. The 240-residue stretch at 350-589 (VMNHEMRTPM…SFIIRLGICN (240 aa)) folds into the Histidine kinase domain. At His353 the chain carries Phosphohistidine; by autocatalysis.

This sequence belongs to the ethylene receptor family. Homodimer; disulfide-linked. Heteromer with ETR1. It depends on Cu cation as a cofactor. Autophosphorylated on both His and Ser residues in the presence of manganese. Loss of His autophosphorylation in the presence of both manganese and magnesium. As to expression, expressed in etiolated seedlings, leaves, stems, roots, flowers, embryos, anthers, carpels and ovules.

The protein resides in the endoplasmic reticulum membrane. It carries out the reaction ATP + protein L-histidine = ADP + protein N-phospho-L-histidine.. Ethylene receptor related to bacterial two-component regulators. Acts as a redundant negative regulator of ethylene signaling. This is Ethylene response sensor 1 (ERS1) from Arabidopsis thaliana (Mouse-ear cress).